The primary structure comprises 533 residues: Basal body-orientation factor 1 (533 aa).

The interval 1–30 (MPAKDKRKDKRKDKRKGKNKGKEPKKIIKS) is disordered. The segment covering 7-19 (RKDKRKDKRKGKN) has biased composition (basic residues). Residues 20-30 (KGKEPKKIIKS) show a composition bias toward basic and acidic residues. Coiled coils occupy residues 34–207 (AIER…EAEK) and 246–368 (LKEA…VEQF). The interval 277–533 (VKEKIMQLTQ…PQGLQDSDIA (257 aa)) is interaction with MNS1 and ODF2. A compositionally biased stretch (polar residues) spans 507-517 (QQAPVSDSNRM). The interval 507 to 533 (QQAPVSDSNRMVSPDVIPQGLQDSDIA) is disordered.

It belongs to the BBOF1 family. Interacts with MNS1 and ODF2. As to expression, expressed exclusively in the testis and predominantly expressed in male germ cells.

The protein localises to the cytoplasm. It localises to the cytoskeleton. It is found in the cilium basal body. Its subcellular location is the flagellum axoneme. Its function is as follows. Plays an essential role in sperm motility and male fertility by stabilizing the sperm flagellar axonemal structure. May be required for the stability of ODF2 and MANS1 proteins. Dispensable for the assembly and function of motile cilia. In Mus musculus (Mouse), this protein is Basal body-orientation factor 1.